The sequence spans 129 residues: M-zodatoxin-Lt8j (129 aa).

An N-terminal signal peptide occupies residues 1–20 (MKYFVVALALVAAFACIAES). Residues 21–60 (KPAESEHELAEVEEENELADLEDAVWLEHLADLSDLEEAR) constitute a propeptide that is removed on maturation.

The protein belongs to the cationic peptide 06 (cytoinsectotoxin) family. Expressed by the venom gland.

It localises to the secreted. Insecticidal, cytolytic and antimicrobial peptide. Forms voltage-dependent, ion-permeable channels in membranes. At high concentration causes cell membrane lysis. This chain is M-zodatoxin-Lt8j (cit 1-9), found in Lachesana tarabaevi (Spider).